We begin with the raw amino-acid sequence, 392 residues long: Succinate--CoA ligase [ADP-forming] subunit beta (392 aa).

Residues 9-248 (KGILKQFGVA…ITEEDPLEYE (240 aa)) form the ATP-grasp domain. Residues lysine 50, 57–59 (GRG), glutamate 103, methionine 106, and glutamate 111 contribute to the ATP site. The Mg(2+) site is built by asparagine 203 and aspartate 217. Substrate-binding positions include asparagine 268 and 325-327 (GIV).

Belongs to the succinate/malate CoA ligase beta subunit family. In terms of assembly, heterotetramer of two alpha and two beta subunits. Mg(2+) is required as a cofactor.

It catalyses the reaction succinate + ATP + CoA = succinyl-CoA + ADP + phosphate. The catalysed reaction is GTP + succinate + CoA = succinyl-CoA + GDP + phosphate. It participates in carbohydrate metabolism; tricarboxylic acid cycle; succinate from succinyl-CoA (ligase route): step 1/1. Its function is as follows. Succinyl-CoA synthetase functions in the citric acid cycle (TCA), coupling the hydrolysis of succinyl-CoA to the synthesis of either ATP or GTP and thus represents the only step of substrate-level phosphorylation in the TCA. The beta subunit provides nucleotide specificity of the enzyme and binds the substrate succinate, while the binding sites for coenzyme A and phosphate are found in the alpha subunit. This chain is Succinate--CoA ligase [ADP-forming] subunit beta, found in Chlorobaculum tepidum (strain ATCC 49652 / DSM 12025 / NBRC 103806 / TLS) (Chlorobium tepidum).